The primary structure comprises 601 residues: Proline--tRNA ligase (601 aa).

This sequence belongs to the class-II aminoacyl-tRNA synthetase family. ProS type 1 subfamily. In terms of assembly, homodimer.

It localises to the cytoplasm. The catalysed reaction is tRNA(Pro) + L-proline + ATP = L-prolyl-tRNA(Pro) + AMP + diphosphate. In terms of biological role, catalyzes the attachment of proline to tRNA(Pro) in a two-step reaction: proline is first activated by ATP to form Pro-AMP and then transferred to the acceptor end of tRNA(Pro). As ProRS can inadvertently accommodate and process non-cognate amino acids such as alanine and cysteine, to avoid such errors it has two additional distinct editing activities against alanine. One activity is designated as 'pretransfer' editing and involves the tRNA(Pro)-independent hydrolysis of activated Ala-AMP. The other activity is designated 'posttransfer' editing and involves deacylation of mischarged Ala-tRNA(Pro). The misacylated Cys-tRNA(Pro) is not edited by ProRS. This Tropheryma whipplei (strain TW08/27) (Whipple's bacillus) protein is Proline--tRNA ligase.